Consider the following 200-residue polypeptide: Glycerol-3-phosphate acyltransferase (200 aa).

Transmembrane regions (helical) follow at residues 8-28 (ALALWGVIGYLLGSIPFGMVL), 57-77 (LAAALTLVLDGGKGVVAVLAA), 88-108 (IAGLMAMIGHCYPVWLRFAGG), 114-134 (FLGIVLALAFPVGVGCCLAWL), and 159-179 (FLLGFPGAVVLLILLGALIFW).

It belongs to the PlsY family. In terms of assembly, probably interacts with PlsX.

The protein localises to the cell inner membrane. The enzyme catalyses an acyl phosphate + sn-glycerol 3-phosphate = a 1-acyl-sn-glycero-3-phosphate + phosphate. The protein operates within lipid metabolism; phospholipid metabolism. Its function is as follows. Catalyzes the transfer of an acyl group from acyl-phosphate (acyl-PO(4)) to glycerol-3-phosphate (G3P) to form lysophosphatidic acid (LPA). This enzyme utilizes acyl-phosphate as fatty acyl donor, but not acyl-CoA or acyl-ACP. This chain is Glycerol-3-phosphate acyltransferase, found in Roseobacter denitrificans (strain ATCC 33942 / OCh 114) (Erythrobacter sp. (strain OCh 114)).